Here is a 353-residue protein sequence, read N- to C-terminus: Photosystem II D2 protein (353 aa).

N-acetylthreonine is present on T2. Residue T2 is modified to Phosphothreonine. A helical transmembrane segment spans residues 41–61 (CAYFALGGWFTGTTFVTSWYT). Residue H118 participates in chlorophyll a binding. Residues 125 to 141 (GFMLRQFELARSVQLRP) form a helical membrane-spanning segment. Residues Q130 and N143 each contribute to the pheophytin a site. The helical transmembrane segment at 153-166 (VFVSVFLIYPLGQS) threads the bilayer. Residue H198 participates in chlorophyll a binding. The helical transmembrane segment at 208–228 (AALLCAIHGATVENTLFEDGD) threads the bilayer. Residues H215 and F262 each contribute to the a plastoquinone site. Position 215 (H215) interacts with Fe cation. A Fe cation-binding site is contributed by H269. A helical membrane pass occupies residues 279 to 295 (GLWMSALGVVGLALNLR).

This sequence belongs to the reaction center PufL/M/PsbA/D family. PSII is composed of 1 copy each of membrane proteins PsbA, PsbB, PsbC, PsbD, PsbE, PsbF, PsbH, PsbI, PsbJ, PsbK, PsbL, PsbM, PsbT, PsbX, PsbY, PsbZ, Psb30/Ycf12, at least 3 peripheral proteins of the oxygen-evolving complex and a large number of cofactors. It forms dimeric complexes. The D1/D2 heterodimer binds P680, chlorophylls that are the primary electron donor of PSII, and subsequent electron acceptors. It shares a non-heme iron and each subunit binds pheophytin, quinone, additional chlorophylls, carotenoids and lipids. There is also a Cl(-1) ion associated with D1 and D2, which is required for oxygen evolution. The PSII complex binds additional chlorophylls, carotenoids and specific lipids. serves as cofactor.

The protein localises to the plastid. It localises to the chloroplast thylakoid membrane. It catalyses the reaction 2 a plastoquinone + 4 hnu + 2 H2O = 2 a plastoquinol + O2. Functionally, photosystem II (PSII) is a light-driven water:plastoquinone oxidoreductase that uses light energy to abstract electrons from H(2)O, generating O(2) and a proton gradient subsequently used for ATP formation. It consists of a core antenna complex that captures photons, and an electron transfer chain that converts photonic excitation into a charge separation. The D1/D2 (PsbA/PsbD) reaction center heterodimer binds P680, the primary electron donor of PSII as well as several subsequent electron acceptors. D2 is needed for assembly of a stable PSII complex. This chain is Photosystem II D2 protein, found in Citrus sinensis (Sweet orange).